Here is an 87-residue protein sequence, read N- to C-terminus: DNA-directed RNA polymerase subunit omega (87 aa).

The protein belongs to the RNA polymerase subunit omega family. The RNAP catalytic core consists of 2 alpha, 1 beta, 1 beta' and 1 omega subunit. When a sigma factor is associated with the core the holoenzyme is formed, which can initiate transcription.

It carries out the reaction RNA(n) + a ribonucleoside 5'-triphosphate = RNA(n+1) + diphosphate. Its function is as follows. Promotes RNA polymerase assembly. Latches the N- and C-terminal regions of the beta' subunit thereby facilitating its interaction with the beta and alpha subunits. The protein is DNA-directed RNA polymerase subunit omega of Pseudomonas syringae pv. syringae (strain B728a).